The primary structure comprises 295 residues: MTSDVETTAEQQEVLIVTGMSGAGRSTVANALEDLDWYVVDNLPPQMLRPLIELANRAESGLPRIAAVVDVRGRNFFADLQEMIQSLREGTKVRVLFLEAADVTLVRRFEQVRRPHPLQGNGTLLDGITAERARLREIRESSDIIVDTSDLNIHQLATRITDIFADENTADVQVTVMSFGFKYGLPADADLVADARFLPNPFWKPELRPYTGLDEVVRNDVLQQNGAEEFIESYLEALRPIFAGYQRENKRHATIAVGCTGGKHRSVAIAEELAARLRSLPGLAVSIKHRDLGRE.

19–26 (GMSGAGRS) contributes to the ATP binding site. GTP is bound at residue 70 to 73 (DVRG).

Belongs to the RapZ-like family.

Functionally, displays ATPase and GTPase activities. The protein is Nucleotide-binding protein Lxx11490 of Leifsonia xyli subsp. xyli (strain CTCB07).